The primary structure comprises 195 residues: Guanylate kinase (195 aa).

The 179-residue stretch at 5–183 folds into the Guanylate kinase-like domain; that stretch reads GILFVISGPS…ALQKITAIII (179 aa). 12–19 lines the ATP pocket; it reads GPSGVGKG.

It belongs to the guanylate kinase family.

Its subcellular location is the cytoplasm. The enzyme catalyses GMP + ATP = GDP + ADP. Functionally, essential for recycling GMP and indirectly, cGMP. The sequence is that of Guanylate kinase from Syntrophomonas wolfei subsp. wolfei (strain DSM 2245B / Goettingen).